Here is a 551-residue protein sequence, read N- to C-terminus: DNA ligase (551 aa).

Position 246 (glutamate 246) interacts with ATP. Lysine 248 serves as the catalytic N6-AMP-lysine intermediate. ATP-binding residues include arginine 253, arginine 268, glutamate 298, phenylalanine 337, arginine 414, and lysine 420.

The protein belongs to the ATP-dependent DNA ligase family. It depends on Mg(2+) as a cofactor.

The catalysed reaction is ATP + (deoxyribonucleotide)n-3'-hydroxyl + 5'-phospho-(deoxyribonucleotide)m = (deoxyribonucleotide)n+m + AMP + diphosphate.. In terms of biological role, DNA ligase that seals nicks in double-stranded DNA during DNA replication, DNA recombination and DNA repair. This chain is DNA ligase, found in Methanobrevibacter smithii (strain ATCC 35061 / DSM 861 / OCM 144 / PS).